We begin with the raw amino-acid sequence, 185 residues long: Pyruvate/ketoisovalerate oxidoreductases common subunit gamma (185 aa).

Heterotetramer of one alpha, one beta, one delta and one gamma chain.

It carries out the reaction 2 oxidized [2Fe-2S]-[ferredoxin] + pyruvate + CoA = 2 reduced [2Fe-2S]-[ferredoxin] + acetyl-CoA + CO2 + H(+). The catalysed reaction is 3-methyl-2-oxobutanoate + 2 oxidized [2Fe-2S]-[ferredoxin] + CoA = 2-methylpropanoyl-CoA + 2 reduced [2Fe-2S]-[ferredoxin] + CO2 + H(+). The chain is Pyruvate/ketoisovalerate oxidoreductases common subunit gamma (porG) from Pyrococcus abyssi (strain GE5 / Orsay).